The sequence spans 103 residues: Truncated secreted TNF-receptor-like protein A53 (103 aa).

Residues 36 to 73 form a TNFR-Cys 1 repeat; the sequence is SCDKGEYLDKRHNQCCNRCPPGEFAKVRCNGNDNTKCE. Disulfide bonds link Cys-37-Cys-50, Cys-51-Cys-64, and Cys-54-Cys-72. Residues 74-103 form a TNFR-Cys 2; truncated repeat; sequence RCPPHTYTTIPIILMDVINVENAQQDHLIR.

Belongs to the poxviridae A53R protein family.

The sequence is that of Truncated secreted TNF-receptor-like protein A53 from Vaccinia virus (strain Copenhagen) (VACV).